A 287-amino-acid chain; its full sequence is BURP domain-containing protein 2 (287 aa).

An N-terminal signal peptide occupies residues 1–21 (MARSLAALLLLLVAAAGASHA). The region spanning 67–287 (FFLEKDLFPG…PQDDMLWVRN (221 aa)) is the BURP domain.

In terms of tissue distribution, expressed in shoot.

This is BURP domain-containing protein 2 (BURP2) from Oryza sativa subsp. japonica (Rice).